The primary structure comprises 409 residues: Protein a6 (409 aa).

S86 carries the post-translational modification Phosphoserine. Residues 106–120 (RAHRTGRRQAPRRAA) are compositionally biased toward basic residues. Positions 106 to 165 (RAHRTGRRQAPRRAATHSYPVTDSILITSDDEHNEQEPSSTARVRSQLSMRSPPPLAPLT) are disordered. Phosphothreonine is present on T133. S134 is modified (phosphoserine). Residues 142-155 (EPSSTARVRSQLSM) are compositionally biased toward polar residues.

The chain is Protein a6 (a6) from Drosophila melanogaster (Fruit fly).